The following is a 720-amino-acid chain: Casein kinase II subunit alpha'-interacting protein (720 aa).

The span at 227–249 (LSSPSFTNRLQRNSFPPTSSSLE) shows a compositional bias: polar residues. Disordered stretches follow at residues 227–250 (LSSP…SLEF), 264–303 (KPLK…SRRL), 333–366 (QNTA…SPKP), 602–640 (TQVQ…VDPT), and 678–698 (LRQS…KCLK). Residues 608–626 (SSSSSSSCSSVSSSSSASS) show a composition bias toward low complexity. Over residues 630 to 640 (PSPPTPWVDPT) the composition is skewed to pro residues. The span at 687–698 (KPVRSHNSKCLK) shows a compositional bias: basic residues.

In terms of assembly, interacts (via C-terminus) with CSNK2A2. Phosphorylated by CK2 (casein kinase II), specifically by complexes containing catalytic subunit CSNK2A2. In terms of tissue distribution, expressed exclusively in testis (at protein level). Within testis, expressed mainly in the intermediate compartment of the seminiferous tubules with weaker expression in the basal and adluminal compartments.

Its subcellular location is the nucleus. In terms of biological role, may play a role in chromatin regulation of male germ cells. The polypeptide is Casein kinase II subunit alpha'-interacting protein (Mus musculus (Mouse)).